A 423-amino-acid chain; its full sequence is GTPase HflX (423 aa).

One can recognise a Hflx-type G domain in the interval 202-366; it reads PAAAIVGYTN…LLETILRNQK (165 aa). GTP contacts are provided by residues 208-215, 233-237, 255-258, 321-324, and 344-346; these read GYTNAGKS, FATLD, DTVG, NKID, and SAK. Positions 215 and 235 each coordinate Mg(2+).

The protein belongs to the TRAFAC class OBG-HflX-like GTPase superfamily. HflX GTPase family. Monomer. Associates with the 50S ribosomal subunit. Mg(2+) is required as a cofactor.

It is found in the cytoplasm. Its function is as follows. GTPase that associates with the 50S ribosomal subunit and may have a role during protein synthesis or ribosome biogenesis. This Lacrimispora saccharolytica (strain ATCC 35040 / DSM 2544 / NRCC 2533 / WM1) (Clostridium saccharolyticum) protein is GTPase HflX.